The following is a 467-amino-acid chain: Coiled-coil domain-containing protein 174 (467 aa).

Disordered regions lie at residues 47–76 and 129–163; these read INKKPSIWSKQNAGVTSRAEKDAEQKLEEQ and GATRESQIEEERDDDDKEEFSDKDIPPPQDPSEEW. Over residues 64–76 the composition is skewed to basic and acidic residues; it reads RAEKDAEQKLEEQ. Residues 64 to 99 adopt a coiled-coil conformation; the sequence is RAEKDAEQKLEEQKTLDKAREKLEEKAKLYEKMTKG. A compositionally biased stretch (acidic residues) spans 136–147; it reads IEEERDDDDKEE. S198 is modified (phosphoserine). A coiled-coil region spans residues 268 to 310; the sequence is LEMLREQTTDQRIKRENIKEKRKAMLEARLAKLRQKKMKKSKE. Disordered stretches follow at residues 301 to 365 and 379 to 454; these read RQKK…IREW and KQSE…VTFQ. Composition is skewed to basic and acidic residues over residues 349–365 and 379–390; these read IQERRDTKPGVPHIREW and KQSELRAERDPE. A compositionally biased stretch (polar residues) spans 406-415; it reads PMSSQPQSRP. Positions 423-446 are enriched in low complexity; the sequence is GHSSGQSQEPSSSHTSTPASESSP.

It localises to the nucleus. Its function is as follows. Probably involved in neuronal development. This is Coiled-coil domain-containing protein 174 (Ccdc174) from Mus musculus (Mouse).